Consider the following 173-residue polypeptide: Shikimate kinase (173 aa).

Position 10-15 (Gly10–Thr15) interacts with ATP. Thr14 contacts Mg(2+). Positions 32, 56, and 78 each coordinate substrate. Arg117 contacts ATP. Arg135 is a substrate binding site.

Belongs to the shikimate kinase family. In terms of assembly, monomer. It depends on Mg(2+) as a cofactor.

It is found in the cytoplasm. It catalyses the reaction shikimate + ATP = 3-phosphoshikimate + ADP + H(+). Its pathway is metabolic intermediate biosynthesis; chorismate biosynthesis; chorismate from D-erythrose 4-phosphate and phosphoenolpyruvate: step 5/7. Catalyzes the specific phosphorylation of the 3-hydroxyl group of shikimic acid using ATP as a cosubstrate. In Limosilactobacillus fermentum (strain NBRC 3956 / LMG 18251) (Lactobacillus fermentum), this protein is Shikimate kinase.